The following is a 470-amino-acid chain: MSYKSAIIGLCLLAVILLAPPLAWHSHTKNIPAIILITWLLTMNLTCIVDAAIWSDDDFLTRWDGKGWCDIVIKLQVGANIGISCAVTNIIYNLHTILKADSVLPDLSSWTKIVKDLVISLFTPVMVMGFSYLLQVFRYGIARYNGCQNLLSPTWITTVLYTMWMLIWSFVGAVYATLVLFVFYKKRKDVRDILHCTNSGLNLTRFARLLIFCFIIILVMFPFSVYTFVQDLQQVEGHYTFKNTHSSTIWNTIIKFDPGRPIYNIWLYVLMSYLVFLIFGLGSDALHMYSKFLRSIKLGFVLDMWKRFIDKNKEKRVGILLNKLSSRKESRNPFSTDSENYISTCTENYSPCVGTPISQAHFYVDYRIPDDPRKSQNKSKKYLFADKETDDILDEIDLKESRHIPYVTQGQSFDDEISLGGFSKVTLDYSEKLHNSASSNFEGESLCYSPASKEENSSSNEHSSENTAGP.

Over 1–5 (MSYKS) the chain is Extracellular. Residues 6 to 23 (AIIGLCLLAVILLAPPLA) form a helical membrane-spanning segment. Topologically, residues 24-29 (WHSHTK) are cytoplasmic. The helical transmembrane segment at 30–53 (NIPAIILITWLLTMNLTCIVDAAI) threads the bilayer. Residues 54 to 70 (WSDDDFLTRWDGKGWCD) are Extracellular-facing. Residues 71-98 (IVIKLQVGANIGISCAVTNIIYNLHTIL) form a helical membrane-spanning segment. The Cytoplasmic portion of the chain corresponds to 99 to 116 (KADSVLPDLSSWTKIVKD). The helical transmembrane segment at 117–134 (LVISLFTPVMVMGFSYLL) threads the bilayer. Topologically, residues 135 to 155 (QVFRYGIARYNGCQNLLSPTW) are extracellular. A helical membrane pass occupies residues 156-183 (ITTVLYTMWMLIWSFVGAVYATLVLFVF). Topologically, residues 184-205 (YKKRKDVRDILHCTNSGLNLTR) are cytoplasmic. A helical transmembrane segment spans residues 206–228 (FARLLIFCFIIILVMFPFSVYTF). Residues 229–266 (VQDLQQVEGHYTFKNTHSSTIWNTIIKFDPGRPIYNIW) are Extracellular-facing. A helical transmembrane segment spans residues 267–285 (LYVLMSYLVFLIFGLGSDA). The Cytoplasmic portion of the chain corresponds to 286–470 (LHMYSKFLRS…EHSSENTAGP (185 aa)). The tract at residues 300-470 (FVLDMWKRFI…EHSSENTAGP (171 aa)) is hydrophilic. Residues 440–470 (NFEGESLCYSPASKEENSSSNEHSSENTAGP) are disordered.

It belongs to the G-protein coupled receptor 4 family.

It localises to the membrane. Functionally, receptor for the peptide pheromone a factor. The protein is Pheromone a factor receptor (STE3) of Saccharomyces cerevisiae (strain ATCC 204508 / S288c) (Baker's yeast).